The following is a 316-amino-acid chain: Ribosomal RNA small subunit methyltransferase H (316 aa).

Residues 42 to 44, Asp62, Phe86, Asp104, and Gln111 contribute to the S-adenosyl-L-methionine site; that span reads GGH.

This sequence belongs to the methyltransferase superfamily. RsmH family.

The protein localises to the cytoplasm. The catalysed reaction is cytidine(1402) in 16S rRNA + S-adenosyl-L-methionine = N(4)-methylcytidine(1402) in 16S rRNA + S-adenosyl-L-homocysteine + H(+). Functionally, specifically methylates the N4 position of cytidine in position 1402 (C1402) of 16S rRNA. This is Ribosomal RNA small subunit methyltransferase H from Polynucleobacter necessarius subsp. necessarius (strain STIR1).